The chain runs to 1220 residues: DNA-directed RNA polymerase subunit beta (1220 aa).

Belongs to the RNA polymerase beta chain family. As to quaternary structure, the RNAP catalytic core consists of 2 alpha, 1 beta, 1 beta' and 1 omega subunit. When a sigma factor is associated with the core the holoenzyme is formed, which can initiate transcription.

The enzyme catalyses RNA(n) + a ribonucleoside 5'-triphosphate = RNA(n+1) + diphosphate. DNA-dependent RNA polymerase catalyzes the transcription of DNA into RNA using the four ribonucleoside triphosphates as substrates. The protein is DNA-directed RNA polymerase subunit beta of Mesomycoplasma hyopneumoniae (strain J / ATCC 25934 / NCTC 10110) (Mycoplasma hyopneumoniae).